Reading from the N-terminus, the 176-residue chain is NADH-quinone oxidoreductase subunit B 1 (176 aa).

4 residues coordinate [4Fe-4S] cluster: Cys-55, Cys-56, Cys-120, and Cys-150.

The protein belongs to the complex I 20 kDa subunit family. As to quaternary structure, NDH-1 is composed of 14 different subunits. Subunits NuoB, C, D, E, F, and G constitute the peripheral sector of the complex. The cofactor is [4Fe-4S] cluster.

The protein resides in the cell inner membrane. It carries out the reaction a quinone + NADH + 5 H(+)(in) = a quinol + NAD(+) + 4 H(+)(out). NDH-1 shuttles electrons from NADH, via FMN and iron-sulfur (Fe-S) centers, to quinones in the respiratory chain. Couples the redox reaction to proton translocation (for every two electrons transferred, four hydrogen ions are translocated across the cytoplasmic membrane), and thus conserves the redox energy in a proton gradient. In Cereibacter sphaeroides (strain ATCC 17029 / ATH 2.4.9) (Rhodobacter sphaeroides), this protein is NADH-quinone oxidoreductase subunit B 1.